Consider the following 490-residue polypeptide: MSQTLFIDGEWISAEKEQIRSIINPFNQEEIATVSEGGREDAIKAIAAARRAFDKGEWSSLSGLERGKIVLKIAELIRRDLEELAELESLDTGKTLEESKADMDDIANVFQYYAGLADKDGGEIISSPIPDSESKIIREPIGVCGQITPWNYPLLQASWKIAPALAAGNTIVMKPSEITPLTTIKVFKLMEEAGVPKGVANLVLGPGATVGDELAVNKDVDLISFTGGIETGKKIMRAASGNVKKIALELGGKNPNIVFKDADLEVAVDQALNAVFFHAGQVCSAGSRLLVEDAIHDQFLAELVKRAKRIKLGNGFHAETESGPLISAEHRAKVEKYVEIGIEEGAKLETGGKRPEDPELQNGFFYEPTIFSNCNSDMRIVQEEVFGPVLTVETFSSEEEVIELANDTIYGLAGAVWSKDIEKCERVAARLRMGTVWINDFHPYFAQAPWGGYKQSGFGRELGKIGLEEYTEVKHVYRNTKPAAVNWFNS.

Residues Lys174, Glu177, and Gly227 to Gly232 contribute to the NAD(+) site. Active-site residues include Glu249 and Cys283. Glu384 provides a ligand contact to NAD(+).

The protein belongs to the aldehyde dehydrogenase family. In terms of assembly, homodimer.

The enzyme catalyses betaine aldehyde + NAD(+) + H2O = glycine betaine + NADH + 2 H(+). It functions in the pathway amine and polyamine biosynthesis; betaine biosynthesis via choline pathway; betaine from betaine aldehyde: step 1/1. With respect to regulation, activity is stimulated by low concentrations of salts and by moderate concentrations of glycine betaine. Highly tolerant to high ionic conditions. In vitro, activity is highly stimulated in the presence of proline. Functionally, involved in the biosynthesis of the osmoprotectant glycine betaine from choline. Catalyzes the oxidation of betaine aldehyde to betaine. Shows specificity for betaine aldehyde as substrate. Can use both NAD(+) and NADP(+), but NAD(+) is strongly preferred. The chain is Betaine aldehyde dehydrogenase from Bacillus subtilis (strain 168).